The primary structure comprises 1292 residues: Myosin-1 (1292 aa).

In terms of domain architecture, Myosin motor spans 35-714 (VGVSDLTLLS…TLFALENMRD (680 aa)). Residue 128–135 (GESGAGKT) coordinates ATP. At Ser356 the chain carries Phosphoserine. The tract at residues 403–485 (SIGILDIYGF…PGIFAALNDS (83 aa)) is actin-binding. 2 IQ domains span residues 718-738 (HNMA…RIDS) and 739-764 (AIRI…YGNK). One can recognise a TH1 domain in the interval 770–960 (KERRAMSLLG…TIMVRRGRPG (191 aa)). Disordered stretches follow at residues 956–991 (RGRP…GHPT), 1017–1180 (YSLN…FPLK), and 1227–1258 (PVAS…SAAT). Residues 1062 to 1081 (MDNSSAAYGNASALPNSAPS) show a composition bias toward polar residues. 2 stretches are compositionally biased toward pro residues: residues 1087 to 1121 (ASRP…PMPR) and 1142 to 1155 (APPP…PPAA). Residues 1157–1219 (PSEPVYEAAF…PTAYIVESKA (63 aa)) enclose the SH3 domain. The segment covering 1240 to 1258 (ATREAGTTSAATAAASAAT) has biased composition (low complexity).

Belongs to the TRAFAC class myosin-kinesin ATPase superfamily. Myosin family. Phosphorylation of the TEDS site (Ser-356) is required for the polarization of the actin cytoskeleton. Phosphorylation probably activates the myosin-I ATPase activity.

The protein localises to the cytoplasm. It localises to the cytoskeleton. It is found in the actin patch. Type-I myosin implicated in the organization of the actin cytoskeleton. Required for proper actin cytoskeleton polarization. At the cell cortex, assembles in patch-like structures together with proteins from the actin-polymerizing machinery and promotes actin assembly. Functions as actin nucleation-promoting factor (NPF) for the Arp2/3 complex. The protein is Myosin-1 (MYO1) of Eremothecium gossypii (strain ATCC 10895 / CBS 109.51 / FGSC 9923 / NRRL Y-1056) (Yeast).